The primary structure comprises 492 residues: MSKKLNDQELVRLDKLNRLIESKQNPYEVTKVANTHNTKSLKEKYDQFSKEQLAEMQLDKPITVSGRVILIRRTFILIQDFHSELQLYINKNKQPDLFKYFNDYLDLGDVVCATGKPMKTNTNELSLDLESLKIISKSLRVPPEKFHGIADEEIRSRKRYLDLVYNKESKERFVYRSKIIAAMRQYFNENGFLEVETPFLHAQIGGAAAKPFVTRYNALDRDYYLRIAPELPLKKLIVGSFEKIYEIGKCFRNEGMDSTHNPEFTSVETYVAYVDYIYMMELTEAIIKYIAKAIGISHTNIKNETIDWNKPFKRIKMTELVKQETGIDFTQVKKIDQALDLAKKHKVHVKEHEKTIGHIINLFFEEFCEKKLVEPTFVTHHPVEISPLSKLDYSDPRYTERFELFAFGKELANGFSELNDPIDQRQRFEKQLEEKQKGNDEASEMDEDFLEALENGLPPTGGLGIGVDRLVMMLTGTTSIRDILFFPHVREE.

Residues Glu-403 and Glu-410 each contribute to the Mg(2+) site.

It belongs to the class-II aminoacyl-tRNA synthetase family. In terms of assembly, homodimer. Requires Mg(2+) as cofactor.

It is found in the cytoplasm. It catalyses the reaction tRNA(Lys) + L-lysine + ATP = L-lysyl-tRNA(Lys) + AMP + diphosphate. The protein is Lysine--tRNA ligase of Mycoplasmoides gallisepticum (strain R(low / passage 15 / clone 2)) (Mycoplasma gallisepticum).